We begin with the raw amino-acid sequence, 842 residues long: Protein translocase subunit SecA (842 aa).

Residues Q85, 103–107 (GEGKT), and D493 each bind ATP. 4 residues coordinate Zn(2+): C825, C827, C836, and H837.

This sequence belongs to the SecA family. In terms of assembly, monomer and homodimer. Part of the essential Sec protein translocation apparatus which comprises SecA, SecYEG and auxiliary proteins SecDF. Other proteins may also be involved. Zn(2+) serves as cofactor.

The protein localises to the cell membrane. It localises to the cytoplasm. The enzyme catalyses ATP + H2O + cellular proteinSide 1 = ADP + phosphate + cellular proteinSide 2.. Functionally, part of the Sec protein translocase complex. Interacts with the SecYEG preprotein conducting channel. Has a central role in coupling the hydrolysis of ATP to the transfer of proteins into and across the cell membrane, serving as an ATP-driven molecular motor driving the stepwise translocation of polypeptide chains across the membrane. The chain is Protein translocase subunit SecA from Streptococcus equi subsp. equi (strain 4047).